We begin with the raw amino-acid sequence, 176 residues long: MGFPKEGEKVQIHSYKHNGSIHRMWEETTILKGTQSLVIGANDRTVVTESDGRTWVTREPAICYFHANYWFNVIGMLREEGVYYYCNLSSPFAYDSEALKYIDYDLDIKVYPDMTYTLLDEDEYEKHSQIMQYPPVIDTILKRNVAHLTQWIHQRKGPFAPDFVDMWYERYLMYRN.

Arg-23 functions as the Proton donor in the catalytic mechanism. Mg(2+) is bound by residues Asn-87, Asp-103, Asp-105, Asp-107, Asp-120, and Glu-123.

It belongs to the Ntdp family. Mg(2+) is required as a cofactor.

It carries out the reaction a ribonucleoside 5'-triphosphate + H2O = a ribonucleoside 5'-diphosphate + phosphate + H(+). The catalysed reaction is a ribonucleoside 5'-diphosphate + H2O = a ribonucleoside 5'-phosphate + phosphate + H(+). Has nucleoside phosphatase activity towards nucleoside triphosphates and nucleoside diphosphates. The polypeptide is Nucleoside triphosphate/diphosphate phosphatase (Bacillus mycoides (strain KBAB4) (Bacillus weihenstephanensis)).